Reading from the N-terminus, the 446-residue chain is Probable D-serine dehydratase (446 aa).

N6-(pyridoxal phosphate)lysine is present on lysine 116.

Belongs to the serine/threonine dehydratase family. DsdA subfamily. Requires pyridoxal 5'-phosphate as cofactor.

The catalysed reaction is D-serine = pyruvate + NH4(+). The protein is Probable D-serine dehydratase of Bacillus thuringiensis subsp. konkukian (strain 97-27).